Reading from the N-terminus, the 266-residue chain is Diphthine synthase (266 aa).

S-adenosyl-L-methionine is bound by residues leucine 9, aspartate 84, valine 87, 112 to 113, leucine 169, alanine 210, and histidine 235; that span reads SI.

This sequence belongs to the diphthine synthase family. Homodimer.

The enzyme catalyses 2-[(3S)-amino-3-carboxypropyl]-L-histidyl-[translation elongation factor 2] + 3 S-adenosyl-L-methionine = diphthine-[translation elongation factor 2] + 3 S-adenosyl-L-homocysteine + 3 H(+). The protein operates within protein modification; peptidyl-diphthamide biosynthesis. Its function is as follows. S-adenosyl-L-methionine-dependent methyltransferase that catalyzes the trimethylation of the amino group of the modified target histidine residue in translation elongation factor 2 (EF-2), to form an intermediate called diphthine. The three successive methylation reactions represent the second step of diphthamide biosynthesis. In Methanosarcina barkeri (strain Fusaro / DSM 804), this protein is Diphthine synthase.